Here is a 52-residue protein sequence, read N- to C-terminus: Large ribosomal subunit protein bL32c (52 aa).

The protein belongs to the bacterial ribosomal protein bL32 family.

The protein resides in the plastid. It is found in the chloroplast. This chain is Large ribosomal subunit protein bL32c, found in Eucalyptus globulus subsp. globulus (Tasmanian blue gum).